Consider the following 535-residue polypeptide: 2-isopropylmalate synthase (535 aa).

The 262-residue stretch at 13–274 folds into the Pyruvate carboxyltransferase domain; that stretch reads VLIFDTTLRD…YFNPFLGRPP (262 aa). Mn(2+) contacts are provided by D22, H213, H215, and N249. Residues 414-535 are regulatory domain; sequence QLEFVQVSCG…LEQRALHPQA (122 aa).

Belongs to the alpha-IPM synthase/homocitrate synthase family. LeuA type 1 subfamily. In terms of assembly, homodimer. Mn(2+) serves as cofactor.

It localises to the cytoplasm. It catalyses the reaction 3-methyl-2-oxobutanoate + acetyl-CoA + H2O = (2S)-2-isopropylmalate + CoA + H(+). It functions in the pathway amino-acid biosynthesis; L-leucine biosynthesis; L-leucine from 3-methyl-2-oxobutanoate: step 1/4. In terms of biological role, catalyzes the condensation of the acetyl group of acetyl-CoA with 3-methyl-2-oxobutanoate (2-ketoisovalerate) to form 3-carboxy-3-hydroxy-4-methylpentanoate (2-isopropylmalate). The sequence is that of 2-isopropylmalate synthase from Thermosynechococcus vestitus (strain NIES-2133 / IAM M-273 / BP-1).